Reading from the N-terminus, the 302-residue chain is Deoxyhypusine hydroxylase (302 aa).

HEAT-like PBS-type repeat units follow at residues 23–49, 54–80, 87–113, 175–201, 206–232, and 239–265; these read ERFRALFTLKNIGGKTAIDAISKAFDD, LKHELAYCLGQMQDPTALEILTKVLKD, VRHEAAEAMGAIGHADVLAILEEYKKD, DRYRAMFSLRNLCTEESVLAIAEGLKD, FRHEVAFVLGQLQEPCSIPYLQENLED, and VRHECAEALGAIATDDCIQILTRYADD. Fe cation-binding residues include His-56, Glu-57, His-89, and Glu-90. Fe cation is bound by residues His-208, Glu-209, His-241, and Glu-242.

This sequence belongs to the deoxyhypusine hydroxylase family. The cofactor is Fe(2+).

The protein localises to the endoplasmic reticulum membrane. The enzyme catalyses [eIF5A protein]-deoxyhypusine + AH2 + O2 = [eIF5A protein]-hypusine + A + H2O. The protein operates within protein modification; eIF5A hypusination. Catalyzes the hydroxylation of the N(6)-(4-aminobutyl)-L-lysine intermediate to form hypusine, an essential post-translational modification only found in mature eIF-5A factor. Essential for organismal viability and plays a role in a wide number of important processes such as cell growth and proliferation, and regulates induction of autophagy and protein synthesis. Has a role in eIF-5A-mediated translational control. The protein is Deoxyhypusine hydroxylase of Drosophila pseudoobscura pseudoobscura (Fruit fly).